Here is a 226-residue protein sequence, read N- to C-terminus: Orotate phosphoribosyltransferase (226 aa).

Residue Lys30 coordinates 5-phospho-alpha-D-ribose 1-diphosphate. 38-39 (FF) lines the orotate pocket. Residues 76-77 (YK), Arg106, Lys107, Lys110, His112, and 132-140 (DDVMTAGTA) each bind 5-phospho-alpha-D-ribose 1-diphosphate. Residues Thr136 and Arg164 each contribute to the orotate site.

Belongs to the purine/pyrimidine phosphoribosyltransferase family. PyrE subfamily. In terms of assembly, homodimer.

The catalysed reaction is orotidine 5'-phosphate + diphosphate = orotate + 5-phospho-alpha-D-ribose 1-diphosphate. The protein operates within pyrimidine metabolism; UMP biosynthesis via de novo pathway; UMP from orotate: step 1/2. Catalyzes the transfer of a ribosyl phosphate group from 5-phosphoribose 1-diphosphate to orotate, leading to the formation of orotidine monophosphate (OMP). The protein is Orotate phosphoribosyltransferase (URA5) of Kluyveromyces lactis (strain ATCC 8585 / CBS 2359 / DSM 70799 / NBRC 1267 / NRRL Y-1140 / WM37) (Yeast).